A 126-amino-acid polypeptide reads, in one-letter code: Protein ApaG (126 aa).

The 125-residue stretch at 2–126 (SDPRYQIDVS…FRLAVPGALH (125 aa)) folds into the ApaG domain.

This is Protein ApaG from Pseudomonas entomophila (strain L48).